Here is a 414-residue protein sequence, read N- to C-terminus: Methylthioribose-1-phosphate isomerase (414 aa).

Polar residues predominate over residues 205–215 (SQSQGSENPPS). Positions 205-224 (SQSQGSENPPSKKQKKDAAP) are disordered. Asp-283 (proton donor) is an active-site residue.

This sequence belongs to the eIF-2B alpha/beta/delta subunits family. MtnA subfamily.

The protein localises to the cytoplasm. It localises to the nucleus. The catalysed reaction is 5-(methylsulfanyl)-alpha-D-ribose 1-phosphate = 5-(methylsulfanyl)-D-ribulose 1-phosphate. Its pathway is amino-acid biosynthesis; L-methionine biosynthesis via salvage pathway; L-methionine from S-methyl-5-thio-alpha-D-ribose 1-phosphate: step 1/6. Catalyzes the interconversion of methylthioribose-1-phosphate (MTR-1-P) into methylthioribulose-1-phosphate (MTRu-1-P). The chain is Methylthioribose-1-phosphate isomerase from Zygosaccharomyces rouxii (strain ATCC 2623 / CBS 732 / NBRC 1130 / NCYC 568 / NRRL Y-229).